The primary structure comprises 371 residues: Probable protein phosphatase 2C 11 (371 aa).

The chain crosses the membrane as a helical span at residues 29–49 (FFFFLFNSQTISSFIIFYLFL). The interval 67–95 (PPLSVAPLRGDANSPPPESSSSPATKSSL) is disordered. Residues 85–94 (SSSSPATKSS) show a composition bias toward low complexity. The PPM-type phosphatase domain maps to 123–368 (SYGYSSLKGK…DNITCIVVRF (246 aa)). Mn(2+) is bound by residues aspartate 159, glycine 160, aspartate 320, and aspartate 359.

It belongs to the PP2C family. Requires Mg(2+) as cofactor. The cofactor is Mn(2+).

Its subcellular location is the membrane. The catalysed reaction is O-phospho-L-seryl-[protein] + H2O = L-seryl-[protein] + phosphate. The enzyme catalyses O-phospho-L-threonyl-[protein] + H2O = L-threonyl-[protein] + phosphate. This Arabidopsis thaliana (Mouse-ear cress) protein is Probable protein phosphatase 2C 11.